A 211-amino-acid polypeptide reads, in one-letter code: Small ribosomal subunit protein uS3 (211 aa).

The region spanning 39–107 (VTKYVESSFA…VPSLNVVEVK (69 aa)) is the KH type-2 domain.

It belongs to the universal ribosomal protein uS3 family. Part of the 30S ribosomal subunit. Forms a tight complex with proteins S10 and S14.

Functionally, binds the lower part of the 30S subunit head. Binds mRNA in the 70S ribosome, positioning it for translation. This is Small ribosomal subunit protein uS3 from Neorickettsia sennetsu (strain ATCC VR-367 / Miyayama) (Ehrlichia sennetsu).